The sequence spans 236 residues: Endonuclease V (236 aa).

2 residues coordinate Mg(2+): D47 and D115.

It belongs to the endonuclease V family. Requires Mg(2+) as cofactor.

The protein localises to the cytoplasm. It catalyses the reaction Endonucleolytic cleavage at apurinic or apyrimidinic sites to products with a 5'-phosphate.. Its function is as follows. DNA repair enzyme involved in the repair of deaminated bases. Selectively cleaves double-stranded DNA at the second phosphodiester bond 3' to a deoxyinosine leaving behind the intact lesion on the nicked DNA. This Xanthomonas campestris pv. campestris (strain 8004) protein is Endonuclease V.